Reading from the N-terminus, the 172-residue chain is MIIYRDLISHDEMFSDIYKIREIAGGLCLEVEGKMVSRTEGNIDDSLIGGNASAEGPEGEGTESTVITGVDIVMNHHLQETSFTKEAYKKYIKDYMKSIKGKLEEQRPERVKPFMTGAAEQIKHILANFKNYQFYIGENMNPDGMVALLDYREDGVTPFMIFFKDGLEMEKC.

The region spanning 1–172 is the TCTP domain; that stretch reads MIIYRDLISH…FKDGLEMEKC (172 aa). Ser-46 is subject to Phosphoserine; by PLK1. Ser-53 bears the Phosphoserine mark. Ser-64 is modified (phosphoserine; by PLK1). The required for reduction of TSC22D1 protein stability stretch occupies residues 70-172; that stretch reads VDIVMNHHLQ…FKDGLEMEKC (103 aa).

This sequence belongs to the TCTP family. As to quaternary structure, homodimer. Interacts with STEAP3. Interacts with TSC22D1; interaction results in the destabilization of TSC22D1 protein.

Its subcellular location is the cytoplasm. Involved in calcium binding and microtubule stabilization. Acts as a negative regulator of TSC22D1-mediated apoptosis, via interaction with and destabilization of TSC22D1 protein. This Oryctolagus cuniculus (Rabbit) protein is Translationally-controlled tumor protein (TPT1).